Here is a 113-residue protein sequence, read N- to C-terminus: UPF0321 protein C569.02c (113 aa).

The first 17 residues, 1–17 (MLLLFCICCAFIKLVLA), serve as a signal peptide directing secretion. N-linked (GlcNAc...) asparagine glycosylation is found at asparagine 20, asparagine 39, and asparagine 65.

It belongs to the UPF0321 family.

This chain is UPF0321 protein C569.02c, found in Schizosaccharomyces pombe (strain 972 / ATCC 24843) (Fission yeast).